We begin with the raw amino-acid sequence, 179 residues long: Pyridoxal 5'-phosphate synthase subunit PdxT (179 aa).

48 to 50 (GES) is a binding site for L-glutamine. C79 functions as the Nucleophile in the catalytic mechanism. Residues R101 and 127–128 (IR) contribute to the L-glutamine site. Residues H163 and E165 each act as charge relay system in the active site.

This sequence belongs to the glutaminase PdxT/SNO family. In terms of assembly, in the presence of PdxS, forms a dodecamer of heterodimers. Only shows activity in the heterodimer.

The catalysed reaction is aldehydo-D-ribose 5-phosphate + D-glyceraldehyde 3-phosphate + L-glutamine = pyridoxal 5'-phosphate + L-glutamate + phosphate + 3 H2O + H(+). It carries out the reaction L-glutamine + H2O = L-glutamate + NH4(+). Its pathway is cofactor biosynthesis; pyridoxal 5'-phosphate biosynthesis. Its function is as follows. Catalyzes the hydrolysis of glutamine to glutamate and ammonia as part of the biosynthesis of pyridoxal 5'-phosphate. The resulting ammonia molecule is channeled to the active site of PdxS. This Francisella philomiragia subsp. philomiragia (strain ATCC 25017 / CCUG 19701 / FSC 153 / O#319-036) protein is Pyridoxal 5'-phosphate synthase subunit PdxT.